A 627-amino-acid polypeptide reads, in one-letter code: Protein fem-1 homolog B (627 aa).

ANK repeat units lie at residues 45–74 (QRST…VQTQ), 87–116 (DGAT…NVNH), 120–149 (TNST…NISI), and 153–182 (YDNT…DPNA). The Zn(2+) site is built by H185, C186, and H218. ANK repeat units follow at residues 186-215 (CGAT…AIVV) and 218-248 (HGMT…DRRS). The stretch at 344 to 377 (SHPIIYRGAVYADNMEFEQCIKLWLHALHLRQKG) is one TPR repeat. ANK repeat units follow at residues 483–527 (EGFT…EVNA) and 531–568 (EGNS…HTDM).

It belongs to the fem-1 family. Component of a CRL2 E3 ubiquitin-protein ligase complex, also named ECS (Elongin BC-CUL2/5-SOCS-box protein) complex, composed of CUL2, Elongin BC (ELOB and ELOC), RBX1 and substrate-specific adapter FEM1B. Homooligomer. Interacts with PPM1F and PHTF1. Interacts with the death domain of FAS/TNFRSF6 and TNFRSF1A. Interacts with CHEK1. Interacts with NKX3-1. As to expression, present in adult testis (at protein level).

The protein localises to the cytoplasm. It is found in the nucleus. It functions in the pathway protein modification; protein ubiquitination. With respect to regulation, activity of the CRL2(FEM1B) complex toward FNIP1 is inhibited by BEX family proteins (BEX1, BEX2, BEX3 and/or BEX4) in absence of reductive stress. Mechanistically, BEX proteins act as pseudosubstrate inhibitors that associate with FEM1B via zinc in absence of reductive stress, thereby preventing association between FEM1B and FNIP1. Substrate-recognition component of a Cul2-RING (CRL2) E3 ubiquitin-protein ligase complex of the DesCEND (destruction via C-end degrons) pathway, which recognizes a C-degron located at the extreme C terminus of target proteins, leading to their ubiquitination and degradation. The C-degron recognized by the DesCEND pathway is usually a motif of less than ten residues and can be present in full-length proteins, truncated proteins or proteolytically cleaved forms. The CRL2(FEM1B) complex specifically recognizes proteins ending with -Gly-Leu-Asp-Arg, such as CDK5R1, leading to their ubiquitination and degradation. Also acts as a regulator of the reductive stress response by mediating ubiquitination of reduced FNIP1: in response to reductive stress, the CRL2(FEM1B) complex specifically recognizes a conserved Cys degron in FNIP1 when this degron is reduced, leading to FNIP1 degradation and subsequent activation of mitochondria to recalibrate reactive oxygen species (ROS). Mechanistically, recognizes and binds reduced FNIP1 through two interface zinc ions, which act as a molecular glue that recruit reduced FNIP1 to FEM1B. Promotes ubiquitination of GLI1, suppressing GLI1 transcriptional activator activity. Promotes ubiquitination and degradation of ANKRD37. Promotes ubiquitination and degradation of SLBP. Involved in apoptosis by acting as a death receptor-associated protein that mediates apoptosis. Also involved in glucose homeostasis in pancreatic islet. May also act as an adapter/mediator in replication stress-induced signaling that leads to the activation of CHEK1. This Rattus norvegicus (Rat) protein is Protein fem-1 homolog B.